The chain runs to 230 residues: Large ribosomal subunit protein uL1 (230 aa).

This sequence belongs to the universal ribosomal protein uL1 family. As to quaternary structure, part of the 50S ribosomal subunit.

Functionally, binds directly to 23S rRNA. The L1 stalk is quite mobile in the ribosome, and is involved in E site tRNA release. Its function is as follows. Protein L1 is also a translational repressor protein, it controls the translation of the L11 operon by binding to its mRNA. In Rhodopseudomonas palustris (strain BisA53), this protein is Large ribosomal subunit protein uL1.